Here is a 158-residue protein sequence, read N- to C-terminus: MYLLTDEVARELKKPFGKVYKELPSIDGKVVSIGDVTTKHLLSNGIIPNLSILDFKTKRNIPVNIPHKFKTIFEVENPQGCISDEAIERIKYLSTIHDRDMALIIKGEEDLLTIPVIKYFPEDTSVIYGQPDEGMVLLKITDELKQKIEKLLKDMEER.

6 residues coordinate GTP: Asp-35, Val-36, Asp-54, Lys-56, Glu-109, and Asp-132.

It belongs to the GTP-dependent DPCK family.

The enzyme catalyses 3'-dephospho-CoA + GTP = GDP + CoA + H(+). It participates in cofactor biosynthesis; coenzyme A biosynthesis. In terms of biological role, catalyzes the GTP-dependent phosphorylation of the 3'-hydroxyl group of dephosphocoenzyme A to form coenzyme A (CoA). This chain is GTP-dependent dephospho-CoA kinase, found in Methanococcus maripaludis (strain C7 / ATCC BAA-1331).